A 410-amino-acid polypeptide reads, in one-letter code: MKEELLKRFTKYVKVDTQSNEESKACPTTPGQMELANILVTELKEIGMQEVTVDEFGYVMATLPSNTTKEVPVIGFLAHLDTATDLTGKNVQPQVHENYDGKDIVLNKDLNVVLSPKQFPELADYNGKTLITTDGTTLLGADDKAGITEIMVAMNHLINHPEIKHGKIRVAFTPDEEIGRGPERFDVEAFGAKYAYTMDGGPLGELEYESFNAAGAKITFNGNSVHPGTAKNKMVNAVKMAMEFNAHIPKDEAPEYTEGYEGFYHLISLNGDVEQAKAYYIIRDFDHLKFVERKTHIASIAKELEEKYGEGSVELKLNDQYYNMREKIEPVKEIVDIVSAAMRNLDIEPKISPIRGGTDGAQLSYKGLPTPNIFGGGENFHGKFEYVALESMVKATEVIIEVARLFEEKE.

Zn(2+) is bound at residue H79. D81 is a catalytic residue. D142 is a binding site for Zn(2+). E176 serves as the catalytic Proton acceptor. Zn(2+) is bound by residues E177, D199, and H381.

Belongs to the peptidase M20B family. Zn(2+) is required as a cofactor.

It localises to the cytoplasm. The enzyme catalyses Release of the N-terminal residue from a tripeptide.. Its function is as follows. Cleaves the N-terminal amino acid of tripeptides. The sequence is that of Peptidase T from Listeria monocytogenes serotype 4b (strain CLIP80459).